The sequence spans 321 residues: Nodulation protein D 1 (321 aa).

Positions 6 to 63 constitute an HTH lysR-type domain; it reads LDLNLLVALDALMTERKLTAAARSINLSQPAMSAAITRLRTYFRDELFTMNGRELVPT. The segment at residues 23-42 is a DNA-binding region (H-T-H motif); that stretch reads LTAAARSINLSQPAMSAAIT.

Belongs to the LysR transcriptional regulatory family.

In terms of biological role, nodD regulates the expression of the nodABCFE genes which encode other nodulation proteins. NodD is also a negative regulator of its own expression. Binds flavonoids as inducers. This chain is Nodulation protein D 1 (nodD1), found in Bradyrhizobium japonicum.